A 21-amino-acid polypeptide reads, in one-letter code: uncharacterized protein (21 aa).

This is an uncharacterized protein from Haemophilus influenzae (strain ATCC 51907 / DSM 11121 / KW20 / Rd).